Reading from the N-terminus, the 594-residue chain is Actin-histidine N-methyltransferase (594 aa).

Residues 1 to 23 form a disordered region; sequence MGKKSRVKTQKSGTGATASVSPK. Residues 10-23 show a composition bias toward polar residues; the sequence is QKSGTGATASVSPK. Residues arginine 75, 104-106, arginine 254, 275-279, and 325-327 contribute to the S-adenosyl-L-methionine site; these read EGF, DMCNH, and SGF. The SET domain occupies 94 to 314; the sequence is EGFEMVSFKE…AGEQIYIFYG (221 aa). The disordered stretch occupies residues 553–594; that stretch reads INGENSIPNGTRLEKEDLNQEQSKRVTEDAKEPSDSTEEVKE. Basic and acidic residues predominate over residues 564–594; the sequence is RLEKEDLNQEQSKRVTEDAKEPSDSTEEVKE.

The protein belongs to the class V-like SAM-binding methyltransferase superfamily. SETD3 actin-histidine methyltransferase family. Interacts with MYOD1. Phosphorylated by GSK3B, which is required for recognition by the SCF(FBXW7) complex and subsequent degradation. Post-translationally, ubiquitinated by the SCF(FBXW7) complex following phosphorylation by GSK3B, leading to its degradation by the proteasome.

Its subcellular location is the cytoplasm. The protein resides in the nucleus. The enzyme catalyses L-histidyl-[protein] + S-adenosyl-L-methionine = N(tele)-methyl-L-histidyl-[protein] + S-adenosyl-L-homocysteine + H(+). Its function is as follows. Protein-histidine N-methyltransferase that specifically mediates 3-methylhistidine (tele-methylhistidine) methylation of actin at 'His-73'. Histidine methylation of actin is required for smooth muscle contraction of the laboring uterus during delivery. Does not have protein-lysine N-methyltransferase activity and probably only catalyzes histidine methylation of actin. This Rhinolophus ferrumequinum (Greater horseshoe bat) protein is Actin-histidine N-methyltransferase.